Consider the following 345-residue polypeptide: uncharacterized protein (345 aa).

Belongs to the transketolase family. Thiamine diphosphate is required as a cofactor.

This is an uncharacterized protein from Sinorhizobium fredii (strain NBRC 101917 / NGR234).